Consider the following 379-residue polypeptide: MERPLRIGIIAGELSGDTLGEGFIKAVKQQYPDAEFVGIGGPKMIAQGCESLFDMEELAVMGLVEVLGRLPRLLKVKAQLVKYFTENPPDVFIGIDAPDFNLRVELDLKNAGIKTVHYVSPSVWAWRQKRIFKIEAATNLVLAFLPFEKAFYDKFNVPCEFIGHTLADAIPLQSDKASAREILGLEQDKQWLSVLPGSRGSELKMLSQPFIETCKKLHQKFPDIGFVVALVNQKRREQFEQAWKEHAPELDFKLVDDTARNVITASDAVMLASGTVALECMLLKRPMVVGYRVNAVTAFLAKRLLKTKYVSLPNILADTELVKEYLQDDCTPDNLFDEVSRLLESDNREMLDKFTEMHHWIRKDADQQAANAVLKLIEK.

The protein belongs to the LpxB family.

It catalyses the reaction a lipid X + a UDP-2-N,3-O-bis[(3R)-3-hydroxyacyl]-alpha-D-glucosamine = a lipid A disaccharide + UDP + H(+). It participates in bacterial outer membrane biogenesis; LPS lipid A biosynthesis. Functionally, condensation of UDP-2,3-diacylglucosamine and 2,3-diacylglucosamine-1-phosphate to form lipid A disaccharide, a precursor of lipid A, a phosphorylated glycolipid that anchors the lipopolysaccharide to the outer membrane of the cell. The polypeptide is Lipid-A-disaccharide synthase (Vibrio campbellii (strain ATCC BAA-1116)).